The chain runs to 229 residues: Wtf element wtf14 (229 aa).

Over residues 1-26 (MENNHHLAKDSLDELNPKRGKGEHET) the composition is skewed to basic and acidic residues. Residues 1 to 27 (MENNHHLAKDSLDELNPKRGKGEHETQ) form a disordered region. 4 consecutive transmembrane segments (helical) span residues 71–91 (IPAV…YLVF), 100–120 (VLFG…LLAT), 151–171 (LYAI…LMFF), and 188–208 (VIGV…PGLF).

The protein belongs to the WTF family.

The protein resides in the endoplasmic reticulum membrane. Functionally, may act in meiotic drive. In Schizosaccharomyces kambucha (Fission yeast), this protein is Wtf element wtf14.